The sequence spans 722 residues: MGPRGRGGSRGGSFRGGGSRGRGRGRGRGGVNRFGKRPRFDSARVEDKEKESEEESLSEAEEDSEVPESESSDESVAEEAPTRPYMALLRSLSKGSGIKRRKLDHEPNNSEESGEDDSSESSADEDAPDDVCGDVDLVDEPEEDHDEIMEQERSDDEDEKDLTDSFNSHFASPDEVEVAERIKSITNHEWVSKRLPSKSARTVLTLPKQKDASDNASGPVPVTNPATLILKPKLKESITSQRPQLDASEQALAAPLFQYYDTLYCQRTVANGHNLRRLVCLHALNHIFKTRDRVIKNSAKLAKESADPDLEFRDQGFTRPKVLMLLPTRNSCAKMIEMMCSLTETDQQENRKRFDDSYVTREKQKFSNDKPTDFRDLFEGNADDMFRLGVKFTRKTIKFFSQFYNSDILLASPLGLRMAMGSTEEKNLDHDFLSSIEIVIMDQADAILMQNWEHVEHIFEHLNRQPKEAHGADFSRIRSWYLDGQSKNYRQTVILSSFNNPDLSEVMRVHCHNWQGKIRIQPDYQGVIQQLGVKVKQTFSRFDAQTIIADPDARFEYFIKAVVPSLTKRVKDSCGTLVFIPSYMDFVRVRNWFATSPAAQSLSFGVISEHTEVSETSRARSHFVTGRQKVLLYTERCHHFWRHQLRGVRRVIFYGLPDNPVFYKEIAGGCLGRSEQDMTLEPGEGSVRAMFSKYDVMKLERVVGTPRVGKMLHEKGDTFDFV.

A compositionally biased stretch (gly residues) spans 1–20; sequence MGPRGRGGSRGGSFRGGGSR. Residues 1 to 168 are disordered; the sequence is MGPRGRGGSR…EKDLTDSFNS (168 aa). The segment covering 38–51 has biased composition (basic and acidic residues); the sequence is PRFDSARVEDKEKE. 2 stretches are compositionally biased toward acidic residues: residues 52–77 and 112–161; these read SEEE…ESVA and ESGE…DEKD.

It belongs to the UTP25 family. Component of the ribosomal small subunit (SSU) processome composed of at least 40 protein subunits and snoRNA U3.

It is found in the nucleus. The protein localises to the nucleolus. In terms of biological role, DEAD-box RNA helicase-like protein required for pre-18S rRNA processing, specifically at sites A0, A1, and A2. The chain is U3 small nucleolar RNA-associated protein 25 (UTP25) from Pyricularia oryzae (strain 70-15 / ATCC MYA-4617 / FGSC 8958) (Rice blast fungus).